We begin with the raw amino-acid sequence, 122 residues long: Large ribosomal subunit protein uL14 (122 aa).

Belongs to the universal ribosomal protein uL14 family. In terms of assembly, part of the 50S ribosomal subunit. Forms a cluster with proteins L3 and L19. In the 70S ribosome, L14 and L19 interact and together make contacts with the 16S rRNA in bridges B5 and B8.

Its function is as follows. Binds to 23S rRNA. Forms part of two intersubunit bridges in the 70S ribosome. The polypeptide is Large ribosomal subunit protein uL14 (Mycolicibacterium gilvum (strain PYR-GCK) (Mycobacterium gilvum (strain PYR-GCK))).